The sequence spans 541 residues: Chaperonin GroEL 5 (541 aa).

ATP contacts are provided by residues 30-33, G415, and D496; that span reads TLGP.

It belongs to the chaperonin (HSP60) family. Forms a cylinder of 14 subunits composed of two heptameric rings stacked back-to-back. Interacts with the co-chaperonin GroES.

Its subcellular location is the cytoplasm. The catalysed reaction is ATP + H2O + a folded polypeptide = ADP + phosphate + an unfolded polypeptide.. Together with its co-chaperonin GroES, plays an essential role in assisting protein folding. The GroEL-GroES system forms a nano-cage that allows encapsulation of the non-native substrate proteins and provides a physical environment optimized to promote and accelerate protein folding. This chain is Chaperonin GroEL 5, found in Bradyrhizobium diazoefficiens (strain JCM 10833 / BCRC 13528 / IAM 13628 / NBRC 14792 / USDA 110).